Here is a 455-residue protein sequence, read N- to C-terminus: Serine--tRNA ligase (455 aa).

252–254 contributes to the L-serine binding site; that stretch reads TAE. ATP-binding positions include 283-285 and Val299; that span reads RKE. Glu306 contacts L-serine. ATP is bound at residue 370-373; sequence EVVS. Thr406 contributes to the L-serine binding site.

Belongs to the class-II aminoacyl-tRNA synthetase family. Type-1 seryl-tRNA synthetase subfamily. Homodimer. The tRNA molecule binds across the dimer.

It localises to the cytoplasm. The catalysed reaction is tRNA(Ser) + L-serine + ATP = L-seryl-tRNA(Ser) + AMP + diphosphate + H(+). It carries out the reaction tRNA(Sec) + L-serine + ATP = L-seryl-tRNA(Sec) + AMP + diphosphate + H(+). The protein operates within aminoacyl-tRNA biosynthesis; selenocysteinyl-tRNA(Sec) biosynthesis; L-seryl-tRNA(Sec) from L-serine and tRNA(Sec): step 1/1. Catalyzes the attachment of serine to tRNA(Ser). Is also able to aminoacylate tRNA(Sec) with serine, to form the misacylated tRNA L-seryl-tRNA(Sec), which will be further converted into selenocysteinyl-tRNA(Sec). This is Serine--tRNA ligase from Pyrococcus abyssi (strain GE5 / Orsay).